We begin with the raw amino-acid sequence, 337 residues long: Ornithine carbamoyltransferase, catabolic (337 aa).

Residues 57 to 60 (STRT), Gln84, Arg108, and 135 to 138 (HPTQ) each bind carbamoyl phosphate. L-ornithine-binding positions include Asn167, Asp231, and 235–236 (SM). Carbamoyl phosphate is bound by residues 272–273 (CL) and Arg317.

This sequence belongs to the aspartate/ornithine carbamoyltransferase superfamily. OTCase family.

It localises to the cytoplasm. It catalyses the reaction carbamoyl phosphate + L-ornithine = L-citrulline + phosphate + H(+). The protein operates within amino-acid degradation; L-arginine degradation via ADI pathway; carbamoyl phosphate from L-arginine: step 2/2. Reversibly catalyzes the transfer of the carbamoyl group from carbamoyl phosphate (CP) to the N(epsilon) atom of ornithine (ORN) to produce L-citrulline. This Streptococcus suis (strain 89/1591) protein is Ornithine carbamoyltransferase, catabolic.